The following is a 366-amino-acid chain: tRNA/tmRNA (uracil-C(5))-methyltransferase (366 aa).

The S-adenosyl-L-methionine site is built by Gln190, Tyr218, Asn223, Glu239, and Asp299. Cys324 functions as the Nucleophile in the catalytic mechanism. Catalysis depends on Glu358, which acts as the Proton acceptor.

This sequence belongs to the class I-like SAM-binding methyltransferase superfamily. RNA M5U methyltransferase family. TrmA subfamily.

It carries out the reaction uridine(54) in tRNA + S-adenosyl-L-methionine = 5-methyluridine(54) in tRNA + S-adenosyl-L-homocysteine + H(+). It catalyses the reaction uridine(341) in tmRNA + S-adenosyl-L-methionine = 5-methyluridine(341) in tmRNA + S-adenosyl-L-homocysteine + H(+). Dual-specificity methyltransferase that catalyzes the formation of 5-methyluridine at position 54 (m5U54) in all tRNAs, and that of position 341 (m5U341) in tmRNA (transfer-mRNA). This chain is tRNA/tmRNA (uracil-C(5))-methyltransferase, found in Salmonella newport (strain SL254).